The primary structure comprises 542 residues: MLO-like protein 7 (542 aa).

The Extracellular segment spans residues 1-38 (MITRSRCRRSLLWFLVFHGGATATGAPSGGKELSQTPT). Residues 39–59 (WAVAVVCTFLILISHLLEKGL) traverse the membrane as a helical segment. Residues 60-82 (QRLANWLWKKHKNSLLEALEKIK) are Cytoplasmic-facing. A helical membrane pass occupies residues 83–103 (AELMILGFISLLLTFGEPYIL). The Extracellular segment spans residues 104 to 165 (KICVPRKAAL…ITLKGLHQLH (62 aa)). A helical transmembrane segment spans residues 166-186 (ILLFFLAIFHIVYSLITMMLS). Residues 187–288 (RLKIRGWKKW…IKRSLEDDFK (102 aa)) lie on the Cytoplasmic side of the membrane. A helical membrane pass occupies residues 289–309 (LVVGISPVLWASFVIFLLFNV). Residues 310–315 (NGWRTL) are Extracellular-facing. The helical transmembrane segment at 316–336 (FWASIPPLLIILAVGTKLQAI) threads the bilayer. Residues 337–374 (MATMALEIVETHAVVQGMPLVQGSDRYFWFDCPQLLLH) are Cytoplasmic-facing. Residues 375-395 (LIHFALFQNAFQITHFFWIWY) traverse the membrane as a helical segment. Residues 396-414 (SFGLKSCFHKDFNLVVSKL) lie on the Extracellular side of the membrane. Residues 415-435 (FLCLGALILCSYITLPLYALV) form a helical membrane-spanning segment. The Cytoplasmic segment spans residues 436 to 542 (TQMGSHMKKA…QQQEMQFHNS (107 aa)). Positions 449–470 (EQMAKALKKWHKDIKLKKGKAR) are calmodulin-binding.

Belongs to the MLO family. Restricted to pollen, synergids, pistils and immature anthers. Also detected in seedlings, leaves, stems and inflorescens.

The protein localises to the cell membrane. It localises to the endomembrane system. Its function is as follows. May be involved in modulation of pathogen defense and leaf cell death. Activity seems to be regulated by Ca(2+)-dependent calmodulin binding and seems not to require heterotrimeric G proteins. Controls pollen tube reception in the female gametophyte synergids. The protein is MLO-like protein 7 (MLO7) of Arabidopsis thaliana (Mouse-ear cress).